The primary structure comprises 279 residues: Urease accessory protein UreD (279 aa).

Belongs to the UreD family. As to quaternary structure, ureD, UreF and UreG form a complex that acts as a GTP-hydrolysis-dependent molecular chaperone, activating the urease apoprotein by helping to assemble the nickel containing metallocenter of UreC. The UreE protein probably delivers the nickel.

The protein localises to the cytoplasm. In terms of biological role, required for maturation of urease via the functional incorporation of the urease nickel metallocenter. This is Urease accessory protein UreD from Rhodopseudomonas palustris (strain ATCC BAA-98 / CGA009).